Consider the following 265-residue polypeptide: MRIVLTNDDGIEAPGLLAARRALEEVGEVITVAPDRNRSGVGRSITFGAELYVEERRMADGGVGYACSGTPVDCVRLVALGMVEGFRPDIVVSGINHGENLGDDITYSGTVAGALEAIVIGVPGIAVSLSTGRPWHGADGREELHFEPVARFTARLAGLALRDLPPGRILNVNAPNLPEEELEGARVTRLGRRFYQDELIEVRDKNGRVGYNIYNNPPGHHDEEGTDFAALQSRRISVTPVHLDLTDTAGLKELESWDIGRLVVR.

A divalent metal cation contacts are provided by D8, D9, S39, and N96.

This sequence belongs to the SurE nucleotidase family. Requires a divalent metal cation as cofactor.

The protein localises to the cytoplasm. It carries out the reaction a ribonucleoside 5'-phosphate + H2O = a ribonucleoside + phosphate. In terms of biological role, nucleotidase that shows phosphatase activity on nucleoside 5'-monophosphates. The sequence is that of 5'-nucleotidase SurE from Rubrobacter xylanophilus (strain DSM 9941 / JCM 11954 / NBRC 16129 / PRD-1).